A 39-amino-acid polypeptide reads, in one-letter code: Natriuretic peptide HsNP-a (39 aa).

The propeptide occupies 1-8 (SGSKTAKI). Cys-12 and Cys-28 are disulfide-bonded.

This sequence belongs to the natriuretic peptide family. As to expression, expressed by the venom gland.

The protein localises to the secreted. Its function is as follows. Snake venom natriuretic peptide that targets both NPR1 and NPR2. Exhibits hypotensive and vasodepressor activities. The chain is Natriuretic peptide HsNP-a from Hoplocephalus stephensii (Stephens's banded snake).